A 1246-amino-acid chain; its full sequence is Stromal processing peptidase, chloroplastic (1246 aa).

Residues 1 to 136 (MASFPSPPLA…AKIRRRHVLH (136 aa)) constitute a chloroplast transit peptide. H228 contributes to the Zn(2+) binding site. E231 (proton acceptor) is an active-site residue. H232 provides a ligand contact to Zn(2+). E302 is an active-site residue. Position 309 (E309) interacts with Zn(2+).

The protein belongs to the peptidase M16 family. The cofactor is Zn(2+). As to expression, widely expressed.

The protein localises to the plastid. Its subcellular location is the chloroplast stroma. Its function is as follows. Cleaves presequences (transit peptides) from chloroplastic protein precursors. Initially recognizes a precursor by binding to the C-terminus of its transit peptide and then removes the transit peptide in a single endoproteolytic step. In a next step, pursues the cleavage of transit peptide to a subfragment form. The polypeptide is Stromal processing peptidase, chloroplastic (Oryza sativa subsp. indica (Rice)).